The following is a 2146-amino-acid chain: Conidial pigment polyketide synthase alb1 (2146 aa).

Residues 8–244 (YLFGDQTISC…KAPGVSGPYH (237 aa)) form an N-terminal acylcarrier protein transacylase domain (SAT) region. One can recognise a Ketosynthase family 3 (KS3) domain in the interval 375 to 806 (RSKIAIIGMS…GGNTALLMED (432 aa)). Active-site for beta-ketoacyl synthase activity residues include C547, H682, and H724. The segment at 911–1232 (GFVFTGQGAQ…LSTLHLAGVE (322 aa)) is malonyl-CoA:ACP transacylase (MAT) domain. S1001 acts as the For acyl/malonyl transferase activity in catalysis. The product template (PT) domain stretch occupies residues 1290–1602 (TTAAQKIVEC…ARKILDTVLP (313 aa)). The interval 1294-1427 (QKIVECREDG…VKLFNCAERE (134 aa)) is N-terminal hotdog fold. Positions 1294–1598 (QKIVECREDG…FQALARKILD (305 aa)) constitute a PKS/mFAS DH domain. Catalysis depends on H1326, which acts as the Proton acceptor; for dehydratase activity. Residues 1453-1598 (AHRMQRGMVY…FQALARKILD (146 aa)) are C-terminal hotdog fold. D1511 acts as the Proton donor; for dehydratase activity in catalysis. Residues 1611 to 1644 (GAPAPAPARPIGEKKAPPPIKVTGPPKPNPSNAR) are disordered. Over residues 1627–1639 (PPPIKVTGPPKPN) the composition is skewed to pro residues. A Carrier 1 domain is found at 1647 to 1721 (SPVVARALEI…DFKAYLAEKG (75 aa)). The residue at position 1681 (S1681) is an O-(pantetheine 4'-phosphoryl)serine. The disordered stretch occupies residues 1724 to 1769 (DSSSPEPSSEPESKFSFNSDASSEASSGLTTPGITSPVKHEAPKGG). Low complexity predominate over residues 1738–1750 (FSFNSDASSEASS). Residues 1768–1845 (GGQNKVWKSI…AVQAALDLKP (78 aa)) form the Carrier 2 domain. S1805 is subject to O-(pantetheine 4'-phosphoryl)serine. A claisen cyclase domain region spans residues 1892–2019 (KLFMFPDGSG…SIGLFGDGKR (128 aa)). S1962 functions as the For Claisen cyclase activity in the catalytic mechanism.

Its subcellular location is the endosome. It carries out the reaction 6 malonyl-CoA + acetyl-CoA + 6 H(+) = naphtopyrone YWA1 + 6 CO2 + 7 CoA + H2O. It participates in pigment biosynthesis; melanin biosynthesis. Non-reducing polyketide synthase; part of the gene cluster that mediates the biosynthesis of dihydroxynaphthalene (DHN)-melanin, a bluish-green pigment and a structural component of the conidial wall. The first step of the pathway is the production of the heptaketide naphtopyrone YWA1 by the polyketide synthase alb1 though condensation of acetyl-CoA with malonyl-CoA. The naphtopyrone YWA1 is then converted to the pentaketide 1,3,6,8-tetrahydroxynaphthalene (1,3,6,8-THN) by the heptaketide hydrolyase ayg1 though chain-length shortening. 1,3,6,8-THN is substrate of the hydroxynaphthalene reductase arp2 to yield scytalone. The scytalone dehydratase arp1 then reduces scytalone to 1,3,8-THN. 1,3,8-THN is also substrate of the hydroxynaphthalene reductase arp2 to yield vermelone. Vermelone is further converted by the multicopper oxidase abr1 to 1,8-DHN. Finally the laccase abr2 transforms 1,8-DHN to DHN-melanin. DHN-melanin biosynthesis appears to be initiated in endosomes where early enzymes (abl1, ayg1, arp1 and arp2) localize, with exocytosis leading to melanin deposition on the cell surface where late enzymes (abr1 and abr2) localize. DHN-melanin is an important structural component of the outer cell wall and is required for the presence of conidial surface hydrophobins. DHN-melanin also plays a crucial role in fungal virulence, including a protective role against the host's immune defenses. DHN-melanin protects also conidia against amoeba predation. The polypeptide is Conidial pigment polyketide synthase alb1 (Aspergillus fumigatus (strain ATCC MYA-4609 / CBS 101355 / FGSC A1100 / Af293) (Neosartorya fumigata)).